A 913-amino-acid polypeptide reads, in one-letter code: MDRGISAVRKAMAPLLEYERQLVLELLDSDGLVVCARGLGADRLLYHFLRLHCHPACLVLVLNTQPAEEEYFINQLKIEGVEHLPRRVTNEITSNSRYEVYTQGGIIFATSRILVVDFLTDRIPSDLITGILVYRAHRIIESCQEAFILRLFRQKNKRGFIKAFTDNAVAFDTGFCHVERVMRNLFVRKLYLWPRFHVAVNSFLEQHKPEVVEIHVSMTPAMLSIQTAILDILNACLKELKCHNPSLEVEDLSLENALGKPFDKTIRHYLDPLWHQLGAKTKSLVQDLKILRTLLQYLSQYDCVTFLNLLESLRATEKVFGQNSGWLFLDASTSMFVNARARVYRVPDVKLNKKAKMSESAEGQETKKELVLESNPKWEALSEVLKEIEAENKESEALGGPGQVLICASDDRTCCQLRDYLTAGAEAFLLRLYRKTFEKDSKAEEVWVNLRKGDGPKRTMKSDKRPKDTKNKERASTKKGAPKRKKRELTLTQVMGTAEEPPEEGAAEEDQQRQATSSPEGCGGEIQHEAFDLNLSSDSAYGILKEPLTIIHPLVGCSDPYALTRVLHEVEPRYVVLYDAELTFVRQLEIYRASRPGKPLRVYFLIYGGSTEEQRYLTALRKEKEAFEKLIREKASMVVPEEREGRDETNLDLARGTVSTDAPADTRKAGGQEHNGTQPSIVVDMREFRSELPSLIHRRGIDIEPVTLEVGDYILTPELCVERKSVSDLIGSLNSGRLYSQCLAMSRYYRRPVLLIEFDAGKPFSLAPRGSFFQEMSSSDVSSKLTLLTLHFPRLRLLWCPSPHATAELFEELKQNKPQPDAATAMAITADSETLPESDKYNPGPQDFVLKMPGINAKNCHSLMNHVKNIAELASLSQERLTSILGHAGNAKQLYDFLHTAYADVVSGGRVRK.

Residues 1–454 form a helicase-like region; sequence MDRGISAVRK…EVWVNLRKGD (454 aa). Leucine-zipper stretches follow at residues 233 to 254 and 270 to 298; these read LNAC…DLSL and LDPL…LQYL. Position 289 is an N6-acetyllysine (Lys289). Residues 453 to 476 show a composition bias toward basic and acidic residues; the sequence is GDGPKRTMKSDKRPKDTKNKERAS. Disordered stretches follow at residues 453–525 and 638–677; these read GDGP…CGGE and VVPE…HNGT. Positions 483–488 match the Nuclear localization signal motif; it reads KRKKRE. Residues 500–509 are compositionally biased toward acidic residues; that stretch reads EPPEEGAAEE. At Ser518 the chain carries Phosphoserine. Positions 638–649 are enriched in basic and acidic residues; it reads VVPEEREGRDET. The tract at residues 655 to 810 is nuclease; sequence RGTVSTDAPA…PSPHATAELF (156 aa). An ERCC4 domain is found at 680–760; the sequence is SIVVDMREFR…RPVLLIEFDA (81 aa). The hhH2, dimerization with ERCC1 stretch occupies residues 834–902; it reads TLPESDKYNP…QLYDFLHTAY (69 aa).

The protein belongs to the XPF family. Heterodimer composed of ERCC1 and ERCC4/XPF. Interacts with SLX4/BTBD12; this interaction is direct and links the ERCC1-ERCC4/XPF complex to SLX4, which may coordinate the action of the structure-specific endonuclease during DNA repair. The cofactor is Mg(2+).

The protein resides in the nucleus. It localises to the chromosome. Its function is as follows. Catalytic component of a structure-specific DNA repair endonuclease responsible for the 5-prime incision during DNA repair, and which is essential for nucleotide excision repair (NER) and interstrand cross-link (ICL) repair. The protein is DNA repair endonuclease XPF of Cricetulus griseus (Chinese hamster).